The sequence spans 162 residues: MRHRKSGRKLNRSSSHRSALFRNMAKSLLTYGKIRTTEAKAKELRGVVEPLITLALRNDLHARRQAYKVLGSHQLVKRLFDEIGPKFVGVPGGYTRVLKLGAPRPGDNAPMAVIELTRLGDAEAAAKEAPAKEVAEEKAAKPAKKAAPKKAEKEEAEDAAEA.

Positions 125-140 are enriched in basic and acidic residues; sequence AAKEAPAKEVAEEKAA. Positions 125 to 162 are disordered; that stretch reads AAKEAPAKEVAEEKAAKPAKKAAPKKAEKEEAEDAAEA.

This sequence belongs to the bacterial ribosomal protein bL17 family. In terms of assembly, part of the 50S ribosomal subunit. Contacts protein L32.

This chain is Large ribosomal subunit protein bL17, found in Oleidesulfovibrio alaskensis (strain ATCC BAA-1058 / DSM 17464 / G20) (Desulfovibrio alaskensis).